The following is a 372-amino-acid chain: MFGFEINAHCANTSARCGTFETPHGPVNTPRFMPVGTLATVKGISTEQLGRTGAQMVLSNTYHLHLQPGEEIVAAAGGLHRFMGWNGPMLTDSGGFQVFSLGDLNKIDDRGVVFRNPRDGRTIDMTPEHATQIQMALGADVAMAFDQCPPYPATENDVIDACRRTHAWLERCVTAHTREDQALFGIVQGGCFPHLRRESAMAVASFDLPGTAVGGVSVGEPAEEMHRIVRDVTPLLPSHKPRYLMGIGTLREMAIAVANGIDLFDCVLPTRLGRHGTVLVGGERWNLRNARFRHDHTPLDPSCSCVACTGHTRAYLHHLIRSEELLGLTLLSIHNITQLVRFTSAMAQAIRDGCFSEDFAPWEPDSPAHHTW.

The active-site Proton acceptor is Asp92. Substrate is bound by residues 92–96, Asp146, Gln188, and Gly215; that span reads DSGGF. The interval 246 to 252 is RNA binding; it reads GIGTLRE. Asp265 functions as the Nucleophile in the catalytic mechanism. Residues 270 to 274 are RNA binding; important for wobble base 34 recognition; sequence TRLGR. Residues Cys303, Cys305, Cys308, and His334 each contribute to the Zn(2+) site.

It belongs to the queuine tRNA-ribosyltransferase family. As to quaternary structure, homodimer. Within each dimer, one monomer is responsible for RNA recognition and catalysis, while the other monomer binds to the replacement base PreQ1. It depends on Zn(2+) as a cofactor.

The enzyme catalyses 7-aminomethyl-7-carbaguanine + guanosine(34) in tRNA = 7-aminomethyl-7-carbaguanosine(34) in tRNA + guanine. Its pathway is tRNA modification; tRNA-queuosine biosynthesis. Functionally, catalyzes the base-exchange of a guanine (G) residue with the queuine precursor 7-aminomethyl-7-deazaguanine (PreQ1) at position 34 (anticodon wobble position) in tRNAs with GU(N) anticodons (tRNA-Asp, -Asn, -His and -Tyr). Catalysis occurs through a double-displacement mechanism. The nucleophile active site attacks the C1' of nucleotide 34 to detach the guanine base from the RNA, forming a covalent enzyme-RNA intermediate. The proton acceptor active site deprotonates the incoming PreQ1, allowing a nucleophilic attack on the C1' of the ribose to form the product. After dissociation, two additional enzymatic reactions on the tRNA convert PreQ1 to queuine (Q), resulting in the hypermodified nucleoside queuosine (7-(((4,5-cis-dihydroxy-2-cyclopenten-1-yl)amino)methyl)-7-deazaguanosine). This is Queuine tRNA-ribosyltransferase from Synechococcus sp. (strain CC9605).